A 560-amino-acid chain; its full sequence is uncharacterized protein (560 aa).

Positions 18-44 (CLRCRRRKVKCDRQYPCSRCKESEESC) form a DNA-binding region, zn(2)-C6 fungal-type. The segment at 60–80 (LSRPITRETDSSAHQETRTRL) is disordered. Residues 64–80 (ITRETDSSAHQETRTRL) are compositionally biased toward basic and acidic residues. Residues 182–202 (FATSIILIVTAIAVALSLESF) form a helical membrane-spanning segment.

It is found in the nucleus membrane. This is an uncharacterized protein from Schizosaccharomyces pombe (strain 972 / ATCC 24843) (Fission yeast).